The chain runs to 459 residues: Nuclear hormone receptor family member nhr-11 (459 aa).

The segment at residues 2–81 is a DNA-binding region (nuclear receptor); it reads GPLCAVCESP…AGMRSELVRS (80 aa). 2 NR C4-type zinc fingers span residues 5-26 and 42-69; these read CAVC…CKAC and CAAD…LRKC. 2 disordered regions span residues 90-119 and 134-162; these read RRKD…EEMD and DLPL…SSFD. Low complexity predominate over residues 97-115; that stretch reads NSDAAPNSNSPSTRQSSSP. One can recognise an NR LBD domain in the interval 188–458; that stretch reads ENNSILQYYH…SMLHEMLNFQ (271 aa).

This sequence belongs to the nuclear hormone receptor family.

Its subcellular location is the nucleus. Functionally, orphan nuclear receptor. The sequence is that of Nuclear hormone receptor family member nhr-11 (nhr-11) from Caenorhabditis elegans.